Consider the following 418-residue polypeptide: STAM-binding protein-like A (418 aa).

The interval 199-218 (PDVHGPPQASLSPQTPPAGA) is disordered. An MPN domain is found at 251–382 (LFVPAELCQR…LTDYGMDDVG (132 aa)). The Zn(2+) site is built by H329, H331, D342, H344, C384, H390, and H392. Positions 329–342 (HTHPTQTAFLSSVD) match the JAMM motif motif.

It belongs to the peptidase M67C family. The cofactor is Zn(2+).

In terms of biological role, zinc metalloprotease that specifically cleaves 'Lys-63'-linked polyubiquitin chains. Does not cleave 'Lys-48'-linked polyubiquitin chains. Functions at the endosome and is able to oppose the ubiquitin-dependent sorting of receptors to lysosomes. The sequence is that of STAM-binding protein-like A (stambpa) from Danio rerio (Zebrafish).